The chain runs to 241 residues: MSMLFYTLITAFLIGIQAELHSESNVPAGHTIPQAHWTKLQHSLDTALRRARSAPAAAIAARVAGQTRNITVDPRLFKKRRLRSPRVLFSTQPPPEAADTQDLDFEVGGAAPFNRTHRSKRSSSHPIFHRGEFSVCDSVSVWVGDKTTATDIKGKEVMVLGEVNINNSVFKQYFFETKCRDPNPVDSGCRGIDSKHWNSYCTTTHTFVKALTMDGKQAAWRFIRIDTACVCVLSRKAVRRA.

Residues 1-18 (MSMLFYTLITAFLIGIQA) form the signal peptide. The propeptide occupies 19-121 (ELHSESNVPA…PFNRTHRSKR (103 aa)). Residues N69, N114, and N166 are each glycosylated (N-linked (GlcNAc...) asparagine). 3 disulfide bridges follow: C136–C201, C179–C229, and C189–C231. The a 1-acyl-sn-glycero-3-phospho-(1D-myo-inositol) site is built by Y173 and K209. K209 provides a ligand contact to a 1-acyl-sn-glycero-3-phospho-L-serine.

It belongs to the NGF-beta family. Homodimer. The homodimer interacts with a single NTRK1 chain. The homodimer interacts with a single NGFR chain. The NGF dimer interacts with a single SORCS2 chain (via extracellular domain). The NGF precursor (proNGF) binds to a receptor complex formed by SORT1 and NGFR, which leads to NGF endocytosis. Both mature NGF and the immature NGF precursor (proNGF) interact with SORCS2 and with the heterodimer formed by SORCS2 and NGFR (via extracellular domains). The NGF precursor (proNGF) has much higher affinity for SORCS2 than mature NGF. The NGF precursor (proNGF) has much higher affinity for SORT1 than mature NGF. Interacts with ADAM10 in a divalent cation-dependent manner. Interacts with SORCS3.

The protein localises to the secreted. The protein resides in the endosome lumen. Functionally, nerve growth factor is important for the development and maintenance of the sympathetic and sensory nervous systems. Extracellular ligand for the NTRK1 and NGFR receptors, activates cellular signaling cascades to regulate neuronal proliferation, differentiation and survival. The immature NGF precursor (proNGF) functions as a ligand for the heterodimeric receptor formed by SORCS2 and NGFR, and activates cellular signaling cascades that lead to inactivation of RAC1 and/or RAC2, reorganization of the actin cytoskeleton and neuronal growth cone collapse. In contrast to mature NGF, the precursor form (proNGF) promotes neuronal apoptosis (in vitro). Inhibits metalloproteinase-dependent proteolysis of platelet glycoprotein VI. Binds lysophosphatidylinositol and lysophosphatidylserine between the two chains of the homodimer. The lipid-bound form promotes histamine relase from mast cells, contrary to the lipid-free form. This is Beta-nerve growth factor (NGF) from Gorilla gorilla gorilla (Western lowland gorilla).